A 516-amino-acid polypeptide reads, in one-letter code: Effector protein hopAB1 (516 aa).

2 disordered regions span residues 1–93 (MSGI…AQPA) and 175–259 (RALA…DEAL). The span at 16–30 (WRADDEPVTERERDS) shows a compositional bias: basic and acidic residues. A compositionally biased stretch (polar residues) spans 31-41 (SSGANLTNSPQ). A compositionally biased stretch (pro residues) spans 81-90 (PVEPRQPPEA). Low complexity-rich tracts occupy residues 183–196 (PAPS…SRSS) and 212–224 (QTSS…SSTS).

The protein belongs to the HopAB family.

The protein resides in the secreted. Its function is as follows. Effector protein that plays different roles depending on the species and plant cultivars that interact with the pathogen. Acts as a virulence determinant by enhancing the development of disease symptoms and bacterial growth. Acts as an avirulence factor by eliciting hypersensitive response (HR) and plant resistance. This is Effector protein hopAB1 (hopAB1) from Pseudomonas syringae pv. syringae (strain B728a).